A 201-amino-acid polypeptide reads, in one-letter code: MIEYVRGELAELSPATAVIDCNGVGYAANISLNTYSAIQGKKNCKLYIYEAIREDAYVLYGFADKQEREIFLLLISVSGIGGNTARMILSALSPAELVNVISTENANLLKTVKGIGLKTAQRVIVDLKDKIKTMGATVAGGSASAGMLLQSASVEVQEEAVAALTMLGFAAAPSQKVVLAILKEEPDAPVEKVIKLALKRL.

The segment at Met-1–Ala-63 is domain I. The tract at residues Asp-64–Ser-142 is domain II. The segment at Ala-143 to Ser-151 is flexible linker. The interval Ala-152–Leu-201 is domain III.

This sequence belongs to the RuvA family. As to quaternary structure, homotetramer. Forms an RuvA(8)-RuvB(12)-Holliday junction (HJ) complex. HJ DNA is sandwiched between 2 RuvA tetramers; dsDNA enters through RuvA and exits via RuvB. An RuvB hexamer assembles on each DNA strand where it exits the tetramer. Each RuvB hexamer is contacted by two RuvA subunits (via domain III) on 2 adjacent RuvB subunits; this complex drives branch migration. In the full resolvosome a probable DNA-RuvA(4)-RuvB(12)-RuvC(2) complex forms which resolves the HJ.

The protein resides in the cytoplasm. In terms of biological role, the RuvA-RuvB-RuvC complex processes Holliday junction (HJ) DNA during genetic recombination and DNA repair, while the RuvA-RuvB complex plays an important role in the rescue of blocked DNA replication forks via replication fork reversal (RFR). RuvA specifically binds to HJ cruciform DNA, conferring on it an open structure. The RuvB hexamer acts as an ATP-dependent pump, pulling dsDNA into and through the RuvAB complex. HJ branch migration allows RuvC to scan DNA until it finds its consensus sequence, where it cleaves and resolves the cruciform DNA. The chain is Holliday junction branch migration complex subunit RuvA from Bacteroides thetaiotaomicron (strain ATCC 29148 / DSM 2079 / JCM 5827 / CCUG 10774 / NCTC 10582 / VPI-5482 / E50).